We begin with the raw amino-acid sequence, 496 residues long: Putative ammonium transporter 1 member 5 (496 aa).

A run of 11 helical transmembrane segments spans residues 50–70 (LLFS…LCAG), 85–105 (VLDA…FAFG), 131–151 (FFLY…GSIA), 156–176 (FVAY…VVSH), 202–222 (FAGS…GALI), 246–266 (LVVL…PGSF), 284–306 (GIGR…TLFG), 314–334 (WNVT…TAGC), 336–356 (VVDP…LIGC), 369–389 (LEAA…VGLF), and 422–442 (LVQI…LFFI). Ser485 bears the Phosphoserine mark.

This sequence belongs to the ammonia transporter channel (TC 1.A.11.2) family.

Its subcellular location is the membrane. In terms of biological role, involved in ammonium transport. This Arabidopsis thaliana (Mouse-ear cress) protein is Putative ammonium transporter 1 member 5 (AMT1-5).